Here is a 398-residue protein sequence, read N- to C-terminus: Type III polyketide synthase pspB (398 aa).

CoA contacts are provided by residues Lys-47 and 47–54; that span reads KLLQINRS. Cys-152 (nucleophile) is an active-site residue. Residue 214–215 participates in substrate binding; sequence SD. Residues Leu-267, Gly-321, 321–324, and Ala-324 contribute to the CoA site; that span reads GGEA.

This sequence belongs to the thiolase-like superfamily. Chalcone/stilbene synthases family. As to quaternary structure, homodimer.

It catalyses the reaction 11 malonyl-CoA + acetyl-CoA + S-adenosyl-L-methionine + 12 NADPH + 22 H(+) = soppiline B + S-adenosyl-L-homocysteine + 12 CO2 + 12 NADP(+) + 12 CoA + 8 H2O. Its pathway is secondary metabolite biosynthesis. Its function is as follows. Type III polyketide synthase; part of the gene cluster that mediates the biosynthesis of the alkylresorcinols called soppilines. The biosynthesis starts with the HR-PKS pspA-catalyzed carbon chain assembly through nine chain elongation cycles, using acetyl CoA and malonyl CoA as a starter and extender units, respectively, to produce the polyketide soppiline A. In the first round, the KR, DH, and CMeT domains work to produce 2-methyl-2-butenyl thioester. In rounds 2 to 5, the KR, DH, and ER domains fully catalyze the reduction of the elongated beta-ketothioester, resulting in the insertion of eight methylene units. The unusual Z,E,Z-triene motif is likely constructed during rounds 6 to 8. Typically, the DH domain introduces a double bond at an alpha,beta-position of an elongated polyketide chain, with the dehydration of a beta-hydroxy group. The last extension cycle would be carried out with L-oriented beta-ketoreduction by the KR domain to produce beta-hydroxy carboxylic acid soppiline A. The type III PKS pspB intercepts the elongated polyketide chain at round 8 from the HR-PKS pspA, followed by a tri-keto extension and decarboxylative aldol cyclization to produce 1,3,5-trisubstituted alkylresorcinol soppiline B. Subsequently, the cytochrome P450 monooxygenase pspC catalyzes three-step oxidations at the C-4 methyl group to carboxylic acid to yield soppiline C. In Penicillium soppii, this protein is Type III polyketide synthase pspB.